The following is a 426-amino-acid chain: Tetracenomycin polyketide synthase ketoacyl synthase alpha subunit (426 aa).

One can recognise a Ketosynthase family 3 (KS3) domain in the interval 6-420 (EKRVVITGIG…GFQSAAVLAR (415 aa)). Residues C173, H313, and H350 each act as for beta-ketoacyl synthase activity in the active site.

This sequence belongs to the thiolase-like superfamily. Beta-ketoacyl-ACP synthases family. In terms of assembly, the tetracenomycin polyketide synthase (TCM PKS) is composed of a ketosynthase complex (TcmKL), an acyl carrier protein (TcmM), a cyclase (TcmN) and a probable second cyclase (TcmJ). TcmK and TcmL form a heterodimeric complex.

The enzyme catalyses 10 malonyl-CoA + 8 H(+) = tetracenomycin F2 + 10 CO2 + 10 CoA + 2 H2O. Its pathway is antibiotic biosynthesis; tetracenomycin C biosynthesis. In terms of biological role, involved in the biosynthesis of tetracenomycin C (TCM C). Part of a type II polyketide synthase (PKS) that catalyzes the synthesis of tetracenomycin F2 (TCM F2), a precursor of TCM C, from malonyl-CoA. TcmK and TcmL form a heterodimeric alpha-beta complex that catalyzes the condensation reactions between the growing acyl-enzyme chain and the malonyl-CoA extender units. The polypeptide is Tetracenomycin polyketide synthase ketoacyl synthase alpha subunit (Streptomyces glaucescens).